Here is a 413-residue protein sequence, read N- to C-terminus: Zeaxanthin glucosyltransferase (413 aa).

The protein belongs to the UDP-glycosyltransferase family.

The enzyme catalyses all-trans-zeaxanthin + 2 UDP-alpha-D-glucose = zeaxanthin bis(beta-D-glucoside) + 2 UDP + 2 H(+). It functions in the pathway carotenoid biosynthesis; zeaxanthin diglucoside biosynthesis. Functionally, catalyzes the glycosylation reaction which converts zeaxanthin to zeaxanthin bis(beta-D-glucoside). The reaction proceeds in two steps with the monoglucoside as an intermediate. The sequence is that of Zeaxanthin glucosyltransferase (crtX) from Pseudescherichia vulneris (Escherichia vulneris).